The following is a 342-amino-acid chain: Heparan sulfate glucosamine 3-O-sulfotransferase 6 (342 aa).

The tract at residues 1–21 (MAGSGGLGGGAGGGQGAGAGQ) is disordered. Over 1–31 (MAGSGGLGGGAGGGQGAGAGQGAALRASRAP) the chain is Cytoplasmic. A helical; Signal-anchor for type II membrane protein transmembrane segment spans residues 32–49 (MLLVALVLGAYCLCALPG). Topologically, residues 50–342 (RCPPAARAPA…QMTGQDFGWG (293 aa)) are lumenal. The tract at residues 55-85 (ARAPAPAPAPSEPSSSVHRPGAPGLPLASGP) is disordered. Residues 66 to 85 (EPSSSVHRPGAPGLPLASGP) show a composition bias toward low complexity. 100-104 (KGGTR) is a binding site for 3'-phosphoadenylyl sulfate. Substrate is bound by residues 122 to 128 (EPHFFDR) and 153 to 156 (KTPS). Positions 181 and 189 each coordinate 3'-phosphoadenylyl sulfate. Substrate is bound at residue 220 to 221 (WS). An N-linked (GlcNAc...) asparagine glycan is attached at Asn-281. Cys-288 and Cys-300 form a disulfide bridge. Residue 305 to 309 (KGRPH) coordinates 3'-phosphoadenylyl sulfate.

It belongs to the sulfotransferase 1 family.

The protein resides in the golgi apparatus membrane. It carries out the reaction alpha-D-glucosaminyl-[heparan sulfate](n) + 3'-phosphoadenylyl sulfate = 3-sulfo-alpha-D-glucosaminyl-[heparan sulfate](n) + adenosine 3',5'-bisphosphate + H(+). Functionally, sulfotransferase that utilizes 3'-phospho-5'-adenylyl sulfate (PAPS) to catalyze the transfer of a sulfo group to heparan sulfate. The substrate-specific O-sulfation generates an enzyme-modified heparan sulfate which acts as a binding receptor to Herpes Simplex Virus-1 (HSV-1) and permits its entry. Unlike 3-OST-1, does not convert non-anticoagulant heparan sulfate to anticoagulant heparan sulfate. This chain is Heparan sulfate glucosamine 3-O-sulfotransferase 6 (HS3ST6), found in Homo sapiens (Human).